We begin with the raw amino-acid sequence, 277 residues long: NH(3)-dependent NAD(+) synthetase (277 aa).

46–53 serves as a coordination point for ATP; it reads GISGGQDS. Aspartate 52 is a binding site for Mg(2+). Arginine 141 serves as a coordination point for deamido-NAD(+). Residue threonine 161 coordinates ATP. Glutamate 166 is a Mg(2+) binding site. Deamido-NAD(+) is bound by residues lysine 174 and aspartate 181. Residues lysine 190 and threonine 212 each coordinate ATP. Residue 262–263 participates in deamido-NAD(+) binding; it reads HK.

This sequence belongs to the NAD synthetase family. Homodimer.

It carries out the reaction deamido-NAD(+) + NH4(+) + ATP = AMP + diphosphate + NAD(+) + H(+). The protein operates within cofactor biosynthesis; NAD(+) biosynthesis; NAD(+) from deamido-NAD(+) (ammonia route): step 1/1. In terms of biological role, catalyzes the ATP-dependent amidation of deamido-NAD to form NAD. Uses ammonia as a nitrogen source. This is NH(3)-dependent NAD(+) synthetase from Corynebacterium efficiens (strain DSM 44549 / YS-314 / AJ 12310 / JCM 11189 / NBRC 100395).